The sequence spans 417 residues: Tyrosine--tRNA ligase (417 aa).

Tyr-40 is a binding site for L-tyrosine. The 'HIGH' region motif lies at 45 to 54 (ATAASLHVGH). Residues Tyr-177 and Gln-181 each contribute to the L-tyrosine site. The short motif at 237-241 (KMGKS) is the 'KMSKS' region element. Lys-240 provides a ligand contact to ATP. The S4 RNA-binding domain occupies 351–414 (ISVVQLITRS…AGRKRHALIK (64 aa)).

It belongs to the class-I aminoacyl-tRNA synthetase family. TyrS type 1 subfamily. In terms of assembly, homodimer.

Its subcellular location is the cytoplasm. The catalysed reaction is tRNA(Tyr) + L-tyrosine + ATP = L-tyrosyl-tRNA(Tyr) + AMP + diphosphate + H(+). Catalyzes the attachment of tyrosine to tRNA(Tyr) in a two-step reaction: tyrosine is first activated by ATP to form Tyr-AMP and then transferred to the acceptor end of tRNA(Tyr). The chain is Tyrosine--tRNA ligase from Dinoroseobacter shibae (strain DSM 16493 / NCIMB 14021 / DFL 12).